The chain runs to 410 residues: Arginine deiminase (410 aa).

The active-site Amidino-cysteine intermediate is the Cys-400.

The protein belongs to the arginine deiminase family.

The protein localises to the cytoplasm. It carries out the reaction L-arginine + H2O = L-citrulline + NH4(+). It functions in the pathway amino-acid degradation; L-arginine degradation via ADI pathway; carbamoyl phosphate from L-arginine: step 1/2. This is Arginine deiminase from Bacillus cytotoxicus (strain DSM 22905 / CIP 110041 / 391-98 / NVH 391-98).